The sequence spans 1027 residues: Presequence protease, mitochondrial (1027 aa).

A mitochondrion-targeting transit peptide spans 1–22 (MIRQCWAGLRLCRALYQTSYRW). Zn(2+) is bound at residue histidine 98. Glutamate 101 functions as the Proton acceptor in the catalytic mechanism. Positions 102 and 199 each coordinate Zn(2+). A disulfide bond links cysteine 113 and cysteine 550. The tract at residues 803–827 (RKAIRPHVVEKSSNPSPSGSEISRT) is disordered. The segment covering 814–825 (SSNPSPSGSEIS) has biased composition (low complexity).

It belongs to the peptidase M16 family. PreP subfamily. Monomer and homodimer; homodimerization is induced by binding of the substrate. It depends on Zn(2+) as a cofactor. Post-translationally, a disulfide bond locks the enzyme in the closed conformation preventing substrate entry into the catalytic chamber.

It is found in the mitochondrion matrix. With respect to regulation, mainly exists in a closed and catalytically competent conformation but a closed-to-open switch allows substrate entry into the catalytic chamber. Substrate binding induces closure and dimerization. A disulfide bond may lock the enzyme in a closed conformation preventing substrate entry into the catalytic chamber, participating in redox regulation of the enzyme. Inhibited by metal-chelating agents. Inhibited by nickel and zinc excess, and slightly activated by manganese. In terms of biological role, metalloendopeptidase of the mitochondrial matrix that functions in peptide cleavage and degradation rather than in protein processing. Has an ATP-independent activity. Specifically cleaves peptides in the range of 5 to 65 residues. Shows a preference for cleavage after small polar residues and before basic residues, but without any positional preference. Degrades the transit peptides of mitochondrial proteins after their cleavage. Also degrades other unstructured peptides. The sequence is that of Presequence protease, mitochondrial (pitrm1) from Xenopus laevis (African clawed frog).